The chain runs to 184 residues: MKIAQEIRAGNVIMHGKDPMVVLKTEYSRGGRNSATVRMKLKSLLSNSGTEVVFKADDKMDQIILDKKECTYSYFADPMYAFMDADFNQFEVEAENMGDAISYLEDGMAVEVVFYDGKAISVELPTSLVREVTWTEPAVKGDTSGKVLKPAKLATGFDIQVPIFVAQGDKIEIDTRTHEYRKRV.

This sequence belongs to the elongation factor P family.

The protein localises to the cytoplasm. The protein operates within protein biosynthesis; polypeptide chain elongation. Involved in peptide bond synthesis. Stimulates efficient translation and peptide-bond synthesis on native or reconstituted 70S ribosomes in vitro. Probably functions indirectly by altering the affinity of the ribosome for aminoacyl-tRNA, thus increasing their reactivity as acceptors for peptidyl transferase. This Leptothrix cholodnii (strain ATCC 51168 / LMG 8142 / SP-6) (Leptothrix discophora (strain SP-6)) protein is Elongation factor P.